Reading from the N-terminus, the 1088-residue chain is MSVWNYAVTAQKPTCVTHSCVGNFTSPQELNLIVAKSTRIEIHLLSPQGLQTILDVPLYGRIATMELFRPHGEAQDFLFVATERYKFCVLQWDYESSELITRAMGDVSDRIGRPTDNGQIGIIDPDCRVIGLHLYDGLFKVIPFDNKGQLKEAFNIRLEELQVLDIKFLYGCTKPTIAVLYQDNKDARHVKTYEVSLKDKNFVEGPWSQNNLDNGADLLIPVPSPLCGVLIIGEETIVYCSANAFKAIPIRPSITKAYGRVDLDGSRYLLGDHAGLIHLLVITHEKEKVTGLKIELLGETSIASSISYLDNAVVFVGSSYGDSQLIKLNLQPDAKGSYVEILEKYVNLGPIVDFCVVDLERQGQGQVVTCSGAYKDGSLRIVRNGIGINEQASVELQGIKGMWSLKSSIDEAFDTFLVVSFISETRILAMNIEDELEETEIEGFLSEVQTLFCHDAVYNQLVQVTSNSVRLVSSTTRELRNKWDAPAGFSVNVATANASQVLLATGGGHLVYLEIGDGTLTEVKHVLLEYEVSCLDINPIGDNPNYSQLAAVGMWTDISVRIFVLPDLTLITKEELGGEIIPRSVLLCAFEGISYLLCALGDGHLLNFQLDTSCGKLRDRKKVSLGTRPITLRTFSSKSATHVFAASDRPAVIYSNNKKLLYSNVNLKEVSHMCPFNSAAFPDSLAIAREGELTIGTIDDIQKLHIRTIPIGEHARRICHQEQTRTFAISCLRNEPSAEESESHFVRLLDAQSFEFLSSYPLDAFECGCSILSCSFTDDKNVYYCVGTAYVLPEENEPTKGRILVFIVEEGRLQLITEKETKGAVYSLNAFNGKLLASINQKIQLYKWMLRDDGTRELQSECGHHGHILALYVQTRGDFIAVGDLMKSISLLIYKHEEGAIEERARDYNANWMTAVEILNDDIYLGTDNCFNIFTVKKNNEGATDEERARMEVVGEYHIGEFVNRFRHGSLVMKLPDSDIGQIPTVIFGTVSGMIGVIASLPQEQYAFLEKLQTSLRKVIKGVGGLSHEQWRSFNNEKRTAEAKGYLDGDLIESFLDLSRGKMEEISKGMDVQVEELCKRVEELTRLH.

Belongs to the DDB1 family. Interacts with DDA1. Binds to KTN80.2/DWA3. Interacts with HTD1.

The protein resides in the nucleus. It participates in protein modification; protein ubiquitination. In terms of biological role, component of light signal transduction machinery. Involved in repression of photomorphogenesis in darkness. Plays a role in DNA repair by forming with DDB2 the UV-damaged DNA-binding protein complex (UV-DDB). This is DNA damage-binding protein 1b from Arabidopsis thaliana (Mouse-ear cress).